Reading from the N-terminus, the 574-residue chain is Adenine deaminase (574 aa).

Belongs to the metallo-dependent hydrolases superfamily. Adenine deaminase family. Mn(2+) serves as cofactor.

The catalysed reaction is adenine + H2O + H(+) = hypoxanthine + NH4(+). This chain is Adenine deaminase, found in Thermosipho africanus (strain TCF52B).